Consider the following 192-residue polypeptide: Signal peptidase complex subunit 2 (192 aa).

Residues 1-46 (MEEKKTESTNKNVKKANLLDHHSIKHILDESVSDIVTSRGYKEDVR) are Cytoplasmic-facing. The helical transmembrane segment at 47–69 (LSNLKLILGTIIIVVALVAQFYN) threads the bilayer. Topologically, residues 70-78 (KKFPENRDF) are lumenal. A helical transmembrane segment spans residues 79–98 (LIGCIALYVVLNAVLQLILY). Topologically, residues 99–192 (TKEKNAILFT…YAEEEPKKKK (94 aa)) are cytoplasmic.

Belongs to the SPCS2 family. In terms of assembly, component of the signal peptidase complex (SPC) composed of a catalytic subunit SEC11 and three accessory subunits SPCS1, SPCS2 and SPCS3. The complex induces a local thinning of the ER membrane which is used to measure the length of the signal peptide (SP) h-region of protein substrates. This ensures the selectivity of the complex towards h-regions shorter than 18-20 amino acids.

The protein localises to the endoplasmic reticulum membrane. Component of the signal peptidase complex (SPC) which catalyzes the cleavage of N-terminal signal sequences from nascent proteins as they are translocated into the lumen of the endoplasmic reticulum. Enhances the enzymatic activity of SPC and facilitates the interactions between different components of the translocation site. The polypeptide is Signal peptidase complex subunit 2 (Arabidopsis thaliana (Mouse-ear cress)).